The sequence spans 466 residues: Glutamate--tRNA ligase (466 aa).

A 'HIGH' region motif is present at residues Pro-11 to Asn-21. The short motif at Lys-243–Arg-247 is the 'KMSKS' region element. Position 246 (Lys-246) interacts with ATP.

The protein belongs to the class-I aminoacyl-tRNA synthetase family. Glutamate--tRNA ligase type 1 subfamily. In terms of assembly, monomer.

The protein localises to the cytoplasm. The catalysed reaction is tRNA(Glu) + L-glutamate + ATP = L-glutamyl-tRNA(Glu) + AMP + diphosphate. Its function is as follows. Catalyzes the attachment of glutamate to tRNA(Glu) in a two-step reaction: glutamate is first activated by ATP to form Glu-AMP and then transferred to the acceptor end of tRNA(Glu). The protein is Glutamate--tRNA ligase of Cupriavidus necator (strain ATCC 17699 / DSM 428 / KCTC 22496 / NCIMB 10442 / H16 / Stanier 337) (Ralstonia eutropha).